A 122-amino-acid chain; its full sequence is Large ribosomal subunit protein uL14 (122 aa).

Belongs to the universal ribosomal protein uL14 family. In terms of assembly, part of the 50S ribosomal subunit. Forms a cluster with proteins L3 and L19. In the 70S ribosome, L14 and L19 interact and together make contacts with the 16S rRNA in bridges B5 and B8.

Its function is as follows. Binds to 23S rRNA. Forms part of two intersubunit bridges in the 70S ribosome. This chain is Large ribosomal subunit protein uL14, found in Cupriavidus taiwanensis (strain DSM 17343 / BCRC 17206 / CCUG 44338 / CIP 107171 / LMG 19424 / R1) (Ralstonia taiwanensis (strain LMG 19424)).